Reading from the N-terminus, the 179-residue chain is uncharacterized protein (179 aa).

Basic and acidic residues predominate over residues 1 to 14 (MTKKVKLDQDEINN). 2 disordered regions span residues 1–90 (MTKK…NNFC) and 121–147 (HKKS…DKKV). Composition is skewed to low complexity over residues 15 to 90 (KNKN…NNFC) and 126 to 137 (RSQSQSSLNSFD). The span at 138–147 (QDNKSKDKKV) shows a compositional bias: basic and acidic residues.

This is an uncharacterized protein from Dictyostelium discoideum (Social amoeba).